Consider the following 514-residue polypeptide: 2-isopropylmalate synthase (514 aa).

Residues 5 to 267 (LVIFDTTLRD…DTRIHTPEIL (263 aa)) form the Pyruvate carboxyltransferase domain. Residues aspartate 14, histidine 202, histidine 204, and asparagine 238 each coordinate Mn(2+). Residues 394-514 (RLVALKVGTQ…GSKEHPQAHV (121 aa)) form a regulatory domain region.

The protein belongs to the alpha-IPM synthase/homocitrate synthase family. LeuA type 1 subfamily. Homodimer. Mn(2+) is required as a cofactor.

It localises to the cytoplasm. It catalyses the reaction 3-methyl-2-oxobutanoate + acetyl-CoA + H2O = (2S)-2-isopropylmalate + CoA + H(+). The protein operates within amino-acid biosynthesis; L-leucine biosynthesis; L-leucine from 3-methyl-2-oxobutanoate: step 1/4. Functionally, catalyzes the condensation of the acetyl group of acetyl-CoA with 3-methyl-2-oxobutanoate (2-ketoisovalerate) to form 3-carboxy-3-hydroxy-4-methylpentanoate (2-isopropylmalate). The chain is 2-isopropylmalate synthase from Hydrogenovibrio crunogenus (strain DSM 25203 / XCL-2) (Thiomicrospira crunogena).